The chain runs to 182 residues: CASP-like protein 2B1 (182 aa).

The Cytoplasmic portion of the chain corresponds to 1–12; sequence MKLIDRRMRLTE. Residues 13–31 form a helical membrane-spanning segment; it reads LLLRCSISVFALLALILVV. The Extracellular portion of the chain corresponds to 32–52; the sequence is TDTEVKLIFTIKKTAKYTDMK. A helical transmembrane segment spans residues 53–73; the sequence is AVVFLVVANGIAAVYSLLQSV. Residues 74–89 are Cytoplasmic-facing; the sequence is RCVVGTMKGRVLFSKP. Residues 90 to 110 traverse the membrane as a helical segment; it reads LAWAFFSGDQAMAYLNVAAIA. Topologically, residues 111–141 are extracellular; the sequence is ATAESGVIAREGEEDLQWMRVCNMYGKFCNQ. The helical transmembrane segment at 142–162 threads the bilayer; that stretch reads MAIGVSSALLASIAMVFVSCI. Residues 163-182 lie on the Cytoplasmic side of the membrane; that stretch reads SAFSLFRLYGATRDRRTTPW.

The protein belongs to the Casparian strip membrane proteins (CASP) family. In terms of assembly, homodimer and heterodimers.

Its subcellular location is the cell membrane. This is CASP-like protein 2B1 from Arabidopsis lyrata subsp. lyrata (Lyre-leaved rock-cress).